The chain runs to 272 residues: Dermonecrotic toxin SpeSicTox-betaIB1a (272 aa).

Residue histidine 5 is part of the active site. Mg(2+) is bound by residues glutamate 25 and aspartate 27. Histidine 41 acts as the Nucleophile in catalysis. 2 disulfide bridges follow: cysteine 45/cysteine 51 and cysteine 47/cysteine 191. Position 85 (aspartate 85) interacts with Mg(2+).

It belongs to the arthropod phospholipase D family. Class II subfamily. Requires Mg(2+) as cofactor. As to expression, expressed by the venom gland.

The protein resides in the secreted. The enzyme catalyses an N-(acyl)-sphingosylphosphocholine = an N-(acyl)-sphingosyl-1,3-cyclic phosphate + choline. It catalyses the reaction an N-(acyl)-sphingosylphosphoethanolamine = an N-(acyl)-sphingosyl-1,3-cyclic phosphate + ethanolamine. The catalysed reaction is a 1-acyl-sn-glycero-3-phosphocholine = a 1-acyl-sn-glycero-2,3-cyclic phosphate + choline. It carries out the reaction a 1-acyl-sn-glycero-3-phosphoethanolamine = a 1-acyl-sn-glycero-2,3-cyclic phosphate + ethanolamine. Functionally, dermonecrotic toxins cleave the phosphodiester linkage between the phosphate and headgroup of certain phospholipids (sphingolipid and lysolipid substrates), forming an alcohol (often choline) and a cyclic phosphate. This toxin acts on sphingomyelin (SM). It may also act on ceramide phosphoethanolamine (CPE), lysophosphatidylcholine (LPC) and lysophosphatidylethanolamine (LPE), but not on lysophosphatidylserine (LPS), and lysophosphatidylglycerol (LPG). It acts by transphosphatidylation, releasing exclusively cyclic phosphate products as second products. Induces dermonecrosis, hemolysis, increased vascular permeability, edema, inflammatory response, and platelet aggregation. The protein is Dermonecrotic toxin SpeSicTox-betaIB1a of Sicarius peruensis (Six-eyed sand spider).